A 638-amino-acid chain; its full sequence is DNA gyrase subunit B (638 aa).

Positions 423-537 (CEVYIVEGDS…KGHVYLAMPP (115 aa)) constitute a Toprim domain. Glutamate 429, aspartate 502, and aspartate 504 together coordinate Mg(2+).

This sequence belongs to the type II topoisomerase GyrB family. As to quaternary structure, heterotetramer, composed of two GyrA and two GyrB chains. In the heterotetramer, GyrA contains the active site tyrosine that forms a transient covalent intermediate with DNA, while GyrB binds cofactors and catalyzes ATP hydrolysis. Requires Mg(2+) as cofactor. It depends on Mn(2+) as a cofactor. The cofactor is Ca(2+).

Its subcellular location is the cytoplasm. It carries out the reaction ATP-dependent breakage, passage and rejoining of double-stranded DNA.. Its function is as follows. A type II topoisomerase that negatively supercoils closed circular double-stranded (ds) DNA in an ATP-dependent manner to modulate DNA topology and maintain chromosomes in an underwound state. Negative supercoiling favors strand separation, and DNA replication, transcription, recombination and repair, all of which involve strand separation. Also able to catalyze the interconversion of other topological isomers of dsDNA rings, including catenanes and knotted rings. Type II topoisomerases break and join 2 DNA strands simultaneously in an ATP-dependent manner. The polypeptide is DNA gyrase subunit B (Treponema denticola (strain ATCC 35405 / DSM 14222 / CIP 103919 / JCM 8153 / KCTC 15104)).